The sequence spans 374 residues: Fe(2+) transport protein 1 (374 aa).

The signal sequence occupies residues 1-33 (MATPRTLVPILPPVAALLLLLVAASSIPILAAA). At 34-62 (QPADACGGAPDQAAADGACHDVPRALRLK) the chain is on the extracellular side. A helical membrane pass occupies residues 63–83 (LIAIPTILVSSVVGVCLPLLS). Over 84–92 (RSVPALRPD) the chain is Cytoplasmic. The chain crosses the membrane as a helical span at residues 93 to 113 (GGLFAVVKAFASGVILATGYM). Topologically, residues 114-137 (HVLPDAFNNLTSPCLPRKPWSEFP) are extracellular. Residues 138–158 (FAAFVAMLAAVSTLMADSLML) form a helical membrane-spanning segment. Topologically, residues 159-219 (TYYNRSKPRP…ATQVQLRRNR (61 aa)) are cytoplasmic. A disordered region spans residues 166–199 (PRPSSGGDVAAVADHGESPDQGHRHGHGHGHGHG). A compositionally biased stretch (basic and acidic residues) spans 179-188 (DHGESPDQGH). A helical membrane pass occupies residues 220 to 240 (VVVQVLEIGIVVHSVVIGLGM). Residues 241–251 (GASQNVCTIRP) lie on the Extracellular side of the membrane. A helical transmembrane segment spans residues 252-272 (LVAAMCFHQMFEGMGLGGCIL). Over 273-282 (QAEYGRRMRS) the chain is Cytoplasmic. A helical membrane pass occupies residues 283–303 (VLVFFFSTTTPFGIALGLALT). Residues 304-313 (RVYRDNSPTA) are Extracellular-facing. Residues 314-334 (LIVVGLLNAASAGLLHYMALV) traverse the membrane as a helical segment. The Cytoplasmic portion of the chain corresponds to 335-353 (ELLAADFMGPKLQGNVRLQ). Residues 354 to 374 (LAAFLAVLLGAGGMSVMAKWA) traverse the membrane as a helical segment.

This sequence belongs to the ZIP transporter (TC 2.A.5) family. In terms of tissue distribution, expressed in companion cells in the upper region of the root.

It is found in the cell membrane. In terms of biological role, iron transporter involved in the uptake of iron from the rhizosphere across the plasma membrane in the root epidermal layer. May also transport other divalent cations. This chain is Fe(2+) transport protein 1 (IRT1), found in Oryza sativa subsp. japonica (Rice).